Here is a 202-residue protein sequence, read N- to C-terminus: Orotate phosphoribosyltransferase (202 aa).

5-phospho-alpha-D-ribose 1-diphosphate-binding positions include K93 and 113 to 121 (EDIITTGGS). Residues T117 and R145 each coordinate orotate.

Belongs to the purine/pyrimidine phosphoribosyltransferase family. PyrE subfamily. As to quaternary structure, homodimer. The cofactor is Mg(2+).

The enzyme catalyses orotidine 5'-phosphate + diphosphate = orotate + 5-phospho-alpha-D-ribose 1-diphosphate. The protein operates within pyrimidine metabolism; UMP biosynthesis via de novo pathway; UMP from orotate: step 1/2. Its function is as follows. Catalyzes the transfer of a ribosyl phosphate group from 5-phosphoribose 1-diphosphate to orotate, leading to the formation of orotidine monophosphate (OMP). The chain is Orotate phosphoribosyltransferase from Campylobacter curvus (strain 525.92).